A 130-amino-acid polypeptide reads, in one-letter code: Small ribosomal subunit protein uS9 (130 aa).

It belongs to the universal ribosomal protein uS9 family.

The protein is Small ribosomal subunit protein uS9 of Shewanella halifaxensis (strain HAW-EB4).